We begin with the raw amino-acid sequence, 521 residues long: Bifunctional purine biosynthesis protein PurH (521 aa).

Residues 1 to 147 (MAKITRALIS…KNNADVTVVV (147 aa)) enclose the MGS-like domain.

This sequence belongs to the PurH family.

The enzyme catalyses (6R)-10-formyltetrahydrofolate + 5-amino-1-(5-phospho-beta-D-ribosyl)imidazole-4-carboxamide = 5-formamido-1-(5-phospho-D-ribosyl)imidazole-4-carboxamide + (6S)-5,6,7,8-tetrahydrofolate. It carries out the reaction IMP + H2O = 5-formamido-1-(5-phospho-D-ribosyl)imidazole-4-carboxamide. Its pathway is purine metabolism; IMP biosynthesis via de novo pathway; 5-formamido-1-(5-phospho-D-ribosyl)imidazole-4-carboxamide from 5-amino-1-(5-phospho-D-ribosyl)imidazole-4-carboxamide (10-formyl THF route): step 1/1. It participates in purine metabolism; IMP biosynthesis via de novo pathway; IMP from 5-formamido-1-(5-phospho-D-ribosyl)imidazole-4-carboxamide: step 1/1. In Geobacter metallireducens (strain ATCC 53774 / DSM 7210 / GS-15), this protein is Bifunctional purine biosynthesis protein PurH.